Here is a 362-residue protein sequence, read N- to C-terminus: UDP-N-acetylglucosamine--N-acetylmuramyl-(pentapeptide) pyrophosphoryl-undecaprenol N-acetylglucosamine transferase (362 aa).

Residues 15–17 (TGG), N127, R165, S191, I247, 266–271 (ALTVSE), and Q292 each bind UDP-N-acetyl-alpha-D-glucosamine.

The protein belongs to the glycosyltransferase 28 family. MurG subfamily.

Its subcellular location is the cell inner membrane. It catalyses the reaction di-trans,octa-cis-undecaprenyl diphospho-N-acetyl-alpha-D-muramoyl-L-alanyl-D-glutamyl-meso-2,6-diaminopimeloyl-D-alanyl-D-alanine + UDP-N-acetyl-alpha-D-glucosamine = di-trans,octa-cis-undecaprenyl diphospho-[N-acetyl-alpha-D-glucosaminyl-(1-&gt;4)]-N-acetyl-alpha-D-muramoyl-L-alanyl-D-glutamyl-meso-2,6-diaminopimeloyl-D-alanyl-D-alanine + UDP + H(+). It functions in the pathway cell wall biogenesis; peptidoglycan biosynthesis. Cell wall formation. Catalyzes the transfer of a GlcNAc subunit on undecaprenyl-pyrophosphoryl-MurNAc-pentapeptide (lipid intermediate I) to form undecaprenyl-pyrophosphoryl-MurNAc-(pentapeptide)GlcNAc (lipid intermediate II). The chain is UDP-N-acetylglucosamine--N-acetylmuramyl-(pentapeptide) pyrophosphoryl-undecaprenol N-acetylglucosamine transferase from Shewanella sp. (strain MR-4).